A 468-amino-acid polypeptide reads, in one-letter code: MDFGLQPPEITSGEMYLGPGAGPMLAAAVAWDGLAAELQSMAASYASIVEGMASESWLGPSSAGMAAAAAPYVTWMSGTSAQAKAAADQARAAVVAYETAFAAVVPPPQIAANRSQLISLVATNIFGQNTAAIAATEAEYGEMWAQDTMAMFGYASSSATASRLTPFTAPPQTTNPSGLAGQAAATGQATALASGTNAVTTALSSAAAQFPFDIIPTLLQGLATLSTQYTQLMGQLINAIFGPTGATTYQNVFVTAANVTKFSTWANDAMSAPNLGMTEFKVFWQPPPAPEIPKSSLGAGLGLRSGLSAGLAHAASAGLGQANLVGDLSVPPSWASATPAVRLVANTLPATSLAAAPATQIPANLLGQMALGSMTGGALGAAAPAIYTGSGARARANGGTPSAEPVKLEAVIAQLQKQPDAVRHWNVDKADLDGLLDRLSKQPGIHAVHVSNGDKPKVALPDTQLGSH.

Residues 447 to 468 (AVHVSNGDKPKVALPDTQLGSH) form a disordered region.

The protein belongs to the mycobacterial PPE family.

This is an uncharacterized protein from Mycobacterium tuberculosis (strain ATCC 25618 / H37Rv).